The primary structure comprises 155 residues: UPF0735 ACT domain-containing protein CA_C1234 (155 aa).

The ACT domain occupies 79 to 154 (TISILIEHRR…NVLKVEIVAM (76 aa)).

The protein belongs to the UPF0735 family.

This is UPF0735 ACT domain-containing protein CA_C1234 from Clostridium acetobutylicum (strain ATCC 824 / DSM 792 / JCM 1419 / IAM 19013 / LMG 5710 / NBRC 13948 / NRRL B-527 / VKM B-1787 / 2291 / W).